A 58-amino-acid chain; its full sequence is uncharacterized protein (58 aa).

2 helical membrane-spanning segments follow: residues 7–27 (IFDI…VAKT) and 29–49 (YGTG…AYKI).

The protein resides in the cell membrane. This is an uncharacterized protein from Bacillus subtilis (strain 168).